A 261-amino-acid polypeptide reads, in one-letter code: UPF0246 protein PMI0005 (261 aa).

It belongs to the UPF0246 family.

The polypeptide is UPF0246 protein PMI0005 (Proteus mirabilis (strain HI4320)).